Consider the following 305-residue polypeptide: HTH-type transcriptional regulator KdgR (305 aa).

Positions 55–116 (VSSVLKVFGI…GESEKYSLTL (62 aa)) constitute an HTH iclR-type domain. Residues 76–95 (ITELSQRVMMSKSTVYRFLQ) constitute a DNA-binding region (H-T-H motif). An IclR-ED domain is found at 131–300 (LIRSADIQMR…ARNISDQMGY (170 aa)).

In terms of assembly, homodimer.

Its subcellular location is the cytoplasm. Its function is as follows. Transcriptional repressor that negatively regulates the expression of genes involved in pectinolysis and in pectinase secretion. Controls genes involved in pectin catabolism, including the pectinase genes (pelA, pelB, pelC, pelE), genes involved in pectin catabolism (kdgT, ogl, kduI-kdgF) and the outT gene involved in pectinase secretion. Acts by binding directly to KdgR binding sites (KdgR-box) in the gene operator/promoter region. This is HTH-type transcriptional regulator KdgR from Dickeya chrysanthemi (Pectobacterium chrysanthemi).